Consider the following 209-residue polypeptide: MPKGILGRKVGMTQIFTEDGRAIPVTVIEAGPCVVVQKKTIANDGYNAIQLGFGEIKESKVNKPLKGHFNRANVKPMRYLREIRVENIDAYEVGQEIKVDIFTVGEKVDVTGISKGKGFAGGIKRHGFHRGPMAHGSKYHRRPGSLGAKGPARVFLGRKLPGRLGMERVTIQNLEVVKVDPERNLLVIKGSVPGIRGSLLIIKEAVKGK.

It belongs to the universal ribosomal protein uL3 family. In terms of assembly, part of the 50S ribosomal subunit. Forms a cluster with proteins L14 and L19.

In terms of biological role, one of the primary rRNA binding proteins, it binds directly near the 3'-end of the 23S rRNA, where it nucleates assembly of the 50S subunit. This Carboxydothermus hydrogenoformans (strain ATCC BAA-161 / DSM 6008 / Z-2901) protein is Large ribosomal subunit protein uL3.